A 297-amino-acid chain; its full sequence is Carbamate kinase (297 aa).

This sequence belongs to the carbamate kinase family.

Its subcellular location is the cytoplasm. It carries out the reaction hydrogencarbonate + NH4(+) + ATP = carbamoyl phosphate + ADP + H2O + H(+). It catalyses the reaction carbamate + ATP = carbamoyl phosphate + ADP. The catalysed reaction is hydrogencarbonate + NH4(+) = carbamate + H2O + H(+). It functions in the pathway nitrogen metabolism; (S)-allantoin degradation. Its function is as follows. Kinase involved in the anaerobic nitrogen utilization via the assimilation of allantoin. Catalyzes the transfer of a phosphate group from carbamoyl phosphate to ADP to produce ATP and leave carbamate, which spontaneously hydrolyzes to ammonia and hydrogencarbonate. This chain is Carbamate kinase, found in Escherichia coli O157:H7.